Reading from the N-terminus, the 251-residue chain is Triosephosphate isomerase (251 aa).

Asn9 to Lys11 contacts substrate. His95 serves as the catalytic Electrophile. Catalysis depends on Glu167, which acts as the Proton acceptor. Substrate-binding positions include Gly173, Ser213, and Gly234–Gly235. Ser213 is modified (phosphoserine).

This sequence belongs to the triosephosphate isomerase family. As to quaternary structure, homodimer.

It is found in the cytoplasm. It carries out the reaction D-glyceraldehyde 3-phosphate = dihydroxyacetone phosphate. It participates in carbohydrate biosynthesis; gluconeogenesis. The protein operates within carbohydrate degradation; glycolysis; D-glyceraldehyde 3-phosphate from glycerone phosphate: step 1/1. Its function is as follows. Involved in the gluconeogenesis. Catalyzes stereospecifically the conversion of dihydroxyacetone phosphate (DHAP) to D-glyceraldehyde-3-phosphate (G3P). The protein is Triosephosphate isomerase of Bacillus cereus (strain B4264).